A 271-amino-acid chain; its full sequence is Chymotrypsin BII (271 aa).

The first 15 residues, 1-15, serve as a signal peptide directing secretion; sequence MIGKLSLLLVCVAVA. A propeptide spans 16–45 (activation peptide); that stretch reads SGNPAAGKPWHWKSPKPLVDPRIHVNATPR. A Peptidase S1 domain is found at 46 to 268; that stretch reads IVGGVEATPH…YLDWIEQKTG (223 aa). A disulfide bond links Cys71 and Cys87. Catalysis depends on charge relay system residues His86 and Asp132. Intrachain disulfides connect Cys196–Cys209 and Cys219–Cys245. The active-site Charge relay system is the Ser223.

It belongs to the peptidase S1 family.

It is found in the secreted. The protein localises to the extracellular space. The enzyme catalyses Preferential cleavage: Tyr-|-Xaa, Trp-|-Xaa, Phe-|-Xaa, Leu-|-Xaa.. Functionally, serine protease with chymotryptic and collagenolytic activities. This is Chymotrypsin BII from Penaeus vannamei (Whiteleg shrimp).